A 203-amino-acid chain; its full sequence is Translation initiation factor IF-3 (203 aa).

Basic and acidic residues predominate over residues 172–182; the sequence is EAPKNEKKTKE. Positions 172-203 are disordered; it reads EAPKNEKKTKENNPPFNRINLMKGENHAKNED.

It belongs to the IF-3 family. As to quaternary structure, monomer.

Its subcellular location is the cytoplasm. Its function is as follows. IF-3 binds to the 30S ribosomal subunit and shifts the equilibrium between 70S ribosomes and their 50S and 30S subunits in favor of the free subunits, thus enhancing the availability of 30S subunits on which protein synthesis initiation begins. In Helicobacter pylori (strain J99 / ATCC 700824) (Campylobacter pylori J99), this protein is Translation initiation factor IF-3.